We begin with the raw amino-acid sequence, 297 residues long: uncharacterized protein (297 aa).

3 disordered regions span residues 19–133 (NEVD…EEKE), 147–214 (AEDD…VGIA), and 226–277 (EKTS…SKEA). Residues 41 to 52 (EEPKNEKEKHDD) show a composition bias toward basic and acidic residues. Residues 77–87 (PAEDDEEDEEF) show a composition bias toward acidic residues. A compositionally biased stretch (polar residues) spans 88 to 101 (PSQSYGPSIPSNFR). Composition is skewed to basic and acidic residues over residues 147–161 (AEDD…REEW) and 236–268 (IHQK…EVRG).

This is an uncharacterized protein from Caenorhabditis elegans.